A 222-amino-acid polypeptide reads, in one-letter code: Vespryn (222 aa).

The first 44 residues, 1–44 (MSPSAGLQFSLYFLQTKKVLWKLTDKEKGLCYILLFTLCFFADQ), serve as a signal peptide directing secretion. Residues 45-52 (ENGGKALA) constitute a propeptide that is removed on maturation. The region spanning 53 to 159 (SPPGIWKRAD…RIWQMGLWWL (107 aa)) is the B30.2/SPRY domain. A propeptide spanning residues 160 to 222 (RHLETDPGRV…LGGTVSLTTL (63 aa)) is cleaved from the precursor. The N-linked (GlcNAc...) asparagine glycan is linked to Asn195.

This sequence belongs to the ohanin/vespryn family. In terms of tissue distribution, expressed by the venom gland.

Its subcellular location is the secreted. Its function is as follows. Neurotoxin that produces dose-dependent hypolocomotion and hyperalgesia in mice. May directly act on the central nervous system, as it is 6500-fold more potent when administered intracerebroventricularly than intraperitoneal. The chain is Vespryn from Crotalus adamanteus (Eastern diamondback rattlesnake).